A 683-amino-acid polypeptide reads, in one-letter code: Synaptic vesicle glycoprotein 2B (683 aa).

Residues Met1–Tyr10 show a composition bias toward basic and acidic residues. Positions Met1–Asp72 are disordered. Over Met1 to Thr110 the chain is Cytoplasmic. Ser33 is subject to Phosphoserine. Thr36 is modified (phosphothreonine). Residues Leu111–Phe131 traverse the membrane as a helical segment. The Extracellular segment spans residues Ala132–Gly148. The helical transmembrane segment at Met149–Ala169 threads the bilayer. At Asp170 to Leu182 the chain is on the cytoplasmic side. The helical transmembrane segment at Ala183–Phe203 threads the bilayer. Topologically, residues Cys204–Arg205 are extracellular. Residues Leu206–Phe226 traverse the membrane as a helical segment. Over Leu227–Ser237 the chain is Cytoplasmic. A helical membrane pass occupies residues Trp238–Ile258. Over Pro259 to Arg277 the chain is Extracellular. Residues Val278–Pro298 traverse the membrane as a helical segment. Over Glu299–Thr390 the chain is Cytoplasmic. A helical transmembrane segment spans residues Leu391–Phe411. Residues Pro412–Asp535 are Extracellular-facing. Tyr423 carries the phosphotyrosine modification. 3 N-linked (GlcNAc...) asparagine glycosylation sites follow: Asn441, Asn491, and Asn516. Residues Phe536–Ser556 traverse the membrane as a helical segment. The Cytoplasmic portion of the chain corresponds to Ala557–Arg565. A helical membrane pass occupies residues Leu566–Gly586. Residues Asn587–Met592 are Extracellular-facing. Residues Ile593–Ile613 traverse the membrane as a helical segment. Residues Thr614–Ala626 are Cytoplasmic-facing. Residues Phe627 to Val649 traverse the membrane as a helical segment. Topologically, residues Gly650 to Lys653 are extracellular. A helical membrane pass occupies residues Val654–Leu672. Topologically, residues Arg673 to Met683 are cytoplasmic.

Belongs to the major facilitator superfamily. Interacts with SYT1 in a calcium-independent manner. Forms a complex with SYT1, syntaxin-1 and SNAP25. As to quaternary structure, (Microbial infection) Interacts with C.botulinum neurotoxin type A1 and type A2 (BoNT/A, botA). Interaction is improved by glycosylation of SV2. In terms of assembly, (Microbial infection) Interacts with C.botulinum neurotoxin type D (BoNT/D, botD). (Microbial infection) Interacts with C.botulinum neurotoxin type E (BoNT/E). Interaction requires glycosylation of SV2 proteins. As to quaternary structure, (Microbial infection) Interacts with C.botulinum neurotoxin type F (BoNT/F). Interaction requires glycosylation of SV2 proteins. In terms of processing, N-glycosylated. Post-translationally, the N-terminal cytoplasmic domain is phosphorylated by CK1. As to expression, widely expressed throughout the brain. Specifically expressed by pinealocytes in the pineal gland. Also detected in testis (at protein level). Specifically expressed in neural tissues. Expressed in the spinal cord and in all brain regions with a stronger expression in hippocampus and cortex.

It is found in the cytoplasmic vesicle. Its subcellular location is the secretory vesicle. The protein localises to the synaptic vesicle membrane. It localises to the acrosome. In terms of biological role, probably plays a role in the control of regulated secretion in neural and endocrine cells. Its function is as follows. (Microbial infection) Receptor for C.botulinum neurotoxin type A (BoNT/A, botA); the toxin binds via extracellular loop 4. Restores uptake of BoNT/A in mouse and rat cells that are deleted for SV2 receptor. Glycosylation of SV2B is not essential for receptor activity, but enhances the interaction. Also serves as a receptor for the closely related C.botulinum neurotoxin type A2; glycosylation is not essential but enhances the interaction. (Microbial infection) Possible receptor for C.botulinum neurotoxin type D (BoNT/D, botD); BoNT/D does not bind to extracellular loop 4 as do BoNT/A and BoNT/E. Another group does not find a convincing interaction with SV2. Functionally, (Microbial infection) Receptor for C.botulinum neurotoxin type E (BoNT/E); the toxin probably binds via extracellular loop 4. Restores uptake of BoNT/E in mouse cells that are deleted for SV2 receptor. Glycosylation of SV2B is not essential for receptor activity, but enhances the interaction. In terms of biological role, (Microbial infection) Receptor for C.botulinum neurotoxin type F (BoNT/F); binding requires glycosylation of this protein. This is Synaptic vesicle glycoprotein 2B (Sv2b) from Rattus norvegicus (Rat).